The chain runs to 422 residues: MKHNFSLRLRVFNLNCWDIPYLSKHRADRMKRLGDFLNLESFDLALLEEVWSEQDFQYLKQKLSLTYPDAHYFRSGIIGSGLCVFSRHPIQEIVQHVYTLNGYPYKFYHGDWFCGKAVGLLVLHLSGLVLNAYVTHLHAEYSRQKDIYFAHRVAQAWELAQFIHHTSKKANVVLLCGDLNMHPKDLGCCLLKEWTGLRDAFVETEDFKGSEDGCTMVPKNCYVSQQDLGPFPFGVRIDYVLYKAVSGFHICCKTLKTTTGCDPHNGTPFSDHEALMATLCVKHSPPQEDPCSAHGSAERSALISALREARTELGRGIAQARWWAALFGYVMILGLSLLVLLCVLAAGEEAREVAIMLWTPSVGLVLGAGAVYLFHKQEAKSLCRAQAEIQHVLTRTTETQDLGSEPHPTHCRQQEADRAEEK.

Glutamate 49 contributes to the Mg(2+) binding site. The active-site Proton acceptor is histidine 272. Helical transmembrane passes span 325–345 (ALFG…CVLA) and 354–374 (AIML…VYLF). The disordered stretch occupies residues 397–422 (TETQDLGSEPHPTHCRQQEADRAEEK). The segment covering 412–422 (RQQEADRAEEK) has biased composition (basic and acidic residues).

It belongs to the neutral sphingomyelinase family. The cofactor is Mg(2+).

It localises to the membrane. It catalyses the reaction a sphingomyelin + H2O = phosphocholine + an N-acylsphing-4-enine + H(+). The catalysed reaction is 1-O-octadecyl-sn-glycero-3-phosphocholine + H2O = 1-O-octadecyl-sn-glycerol + phosphocholine + H(+). It carries out the reaction an N-(acyl)-sphingosylphosphocholine + H2O = an N-acyl-sphingoid base + phosphocholine + H(+). The enzyme catalyses 1-hexadecanoyl-sn-glycero-3-phosphocholine + H2O = 1-hexadecanoyl-sn-glycerol + phosphocholine + H(+). It catalyses the reaction a sphingosylphosphocholine + H2O = a sphingoid base + phosphocholine + H(+). The catalysed reaction is 1-O-hexadecyl-sn-glycero-3-phosphocholine + H2O = 1-O-hexadecyl-sn-glycerol + phosphocholine + H(+). The protein operates within lipid metabolism; sphingolipid metabolism. Functionally, catalyzes the hydrolysis of sphingomyelin to form ceramide and phosphocholine. Ceramide mediates numerous cellular functions, such as apoptosis and growth arrest, and is capable of regulating these 2 cellular events independently. Also hydrolyzes sphingosylphosphocholine. Hydrolyze 1-acyl-2-lyso-sn-glycero-3-phosphocholine (lyso-PC) and 1-O-alkyl-2-lyso-sn-glycero-3-phosphocholine (lyso-platelet-activating factor). This Rattus norvegicus (Rat) protein is Sphingomyelin phosphodiesterase 2 (Smpd2).